A 141-amino-acid chain; its full sequence is Large ribosomal subunit protein uL11c (141 aa).

Belongs to the universal ribosomal protein uL11 family. Part of the ribosomal stalk of the 50S ribosomal subunit. Interacts with L10 and the large rRNA to form the base of the stalk. L10 forms an elongated spine to which L12 dimers bind in a sequential fashion forming a multimeric L10(L12)X complex.

Its subcellular location is the plastid. The protein localises to the chloroplast. Its function is as follows. Forms part of the ribosomal stalk which helps the ribosome interact with GTP-bound translation factors. This is Large ribosomal subunit protein uL11c from Trieres chinensis (Marine centric diatom).